Consider the following 530-residue polypeptide: Estrogen receptor beta (530 aa).

A modulating region spans residues 1–148 (MEIKNSPSSL…SPSAKRDAHF (148 aa)). Phosphoserine; alternate is present on Ser-61. O-linked (GlcNAc) serine; alternate glycosylation is present at Ser-61. Residues Ser-87 and Ser-105 each carry the phosphoserine; by MAPK modification. 2 consecutive NR C4-type zinc fingers follow at residues 149 to 169 (CAVC…CEGC) and 185 to 209 (CPAT…LRKC). The segment at residues 149-214 (CAVCSDYASG…RLRKCYEVGM (66 aa)) is a DNA-binding region (nuclear receptor). Residues 264 to 498 (SPEQLVLTLL…DLLLEMLNAH (235 aa)) enclose the NR LBD domain. Residues 506–515 (SISGSECCST) are compositionally biased toward polar residues. The disordered stretch occupies residues 506–530 (SISGSECCSTEDSKSKEGSQNLQSQ).

Belongs to the nuclear hormone receptor family. NR3 subfamily. As to quaternary structure, binds DNA as a homodimer. Can form a heterodimer with ESR1. Interacts with NCOA1, NCOA3, NCOA5 and NCOA6 coactivators, leading to a strong increase of transcription of target genes. Interacts with UBE1C and AKAP13. Interacts with DNTTIP2. Interacts with CCDC62 in the presence of estradiol/E2; this interaction seems to enhance the transcription of target genes. Interacts with DNAAF4. Interacts with PRMT2. Interacts with CCAR2 (via N-terminus) in a ligand-independent manner. Interacts with RBM39, in the presence of estradiol (E2). Interacts with STUB1/CHIP. Post-translationally, phosphorylation at Ser-87 and Ser-105 recruits NCOA1. In terms of tissue distribution, expressed in prostate, ovary, Leydig cells and in epithelium of the efferent ductules and of the initial segment of the epididymis.

The protein localises to the nucleus. Nuclear hormone receptor. Binds estrogens with an affinity similar to that of ESR1/ER-alpha, and activates expression of reporter genes containing estrogen response elements (ERE) in an estrogen-dependent manner. In Mus musculus (Mouse), this protein is Estrogen receptor beta (Esr2).